The following is a 206-amino-acid chain: Protein GrpE (206 aa).

It belongs to the GrpE family. In terms of assembly, homodimer.

It is found in the cytoplasm. In terms of biological role, participates actively in the response to hyperosmotic and heat shock by preventing the aggregation of stress-denatured proteins, in association with DnaK and GrpE. It is the nucleotide exchange factor for DnaK and may function as a thermosensor. Unfolded proteins bind initially to DnaJ; upon interaction with the DnaJ-bound protein, DnaK hydrolyzes its bound ATP, resulting in the formation of a stable complex. GrpE releases ADP from DnaK; ATP binding to DnaK triggers the release of the substrate protein, thus completing the reaction cycle. Several rounds of ATP-dependent interactions between DnaJ, DnaK and GrpE are required for fully efficient folding. This chain is Protein GrpE, found in Shewanella baltica (strain OS223).